A 390-amino-acid polypeptide reads, in one-letter code: Chalcone synthase (390 aa).

Residue cysteine 164 is part of the active site.

Belongs to the thiolase-like superfamily. Chalcone/stilbene synthases family.

It catalyses the reaction (E)-4-coumaroyl-CoA + 3 malonyl-CoA + 3 H(+) = 2',4,4',6'-tetrahydroxychalcone + 3 CO2 + 4 CoA. It functions in the pathway secondary metabolite biosynthesis; flavonoid biosynthesis. The primary product of this enzyme is 4,2',4',6'-tetrahydroxychalcone (also termed naringenin-chalcone or chalcone) which can under specific conditions spontaneously isomerize into naringenin. In Onobrychis viciifolia (Common sainfoin), this protein is Chalcone synthase (CHS).